We begin with the raw amino-acid sequence, 116 residues long: MTEQTDVAMPISFTDAAAAKVKALLDEEQNDALKLRVYVTGGGCSGFQYGFTFDEKVNDGDFTVEKQGVQLVVDPMSLQYLMGGEVDYTSGLEGSRFFVKNPNATTTCGCGASFSV.

Residues Cys44, Cys108, and Cys110 each coordinate iron-sulfur cluster.

It belongs to the HesB/IscA family. Homodimer. It depends on iron-sulfur cluster as a cofactor.

Its function is as follows. Required for insertion of 4Fe-4S clusters for at least IspG. The chain is Iron-sulfur cluster insertion protein ErpA from Shewanella amazonensis (strain ATCC BAA-1098 / SB2B).